The chain runs to 476 residues: Ribulose bisphosphate carboxylase large chain (476 aa).

A propeptide spanning residues methionine 1 to serine 2 is cleaved from the precursor. Proline 3 bears the N-acetylproline mark. Residue lysine 14 is modified to N6,N6,N6-trimethyllysine. Substrate-binding residues include asparagine 123 and threonine 173. Residue lysine 175 is the Proton acceptor of the active site. Lysine 177 provides a ligand contact to substrate. 3 residues coordinate Mg(2+): lysine 201, aspartate 203, and glutamate 204. Lysine 201 is modified (N6-carboxylysine). Histidine 294 serves as the catalytic Proton acceptor. Residues arginine 295, histidine 327, and serine 379 each contribute to the substrate site.

The protein belongs to the RuBisCO large chain family. Type I subfamily. In terms of assembly, heterohexadecamer of 8 large chains and 8 small chains; disulfide-linked. The disulfide link is formed within the large subunit homodimers. Requires Mg(2+) as cofactor. The disulfide bond which can form in the large chain dimeric partners within the hexadecamer appears to be associated with oxidative stress and protein turnover.

Its subcellular location is the plastid. The protein localises to the chloroplast. It carries out the reaction 2 (2R)-3-phosphoglycerate + 2 H(+) = D-ribulose 1,5-bisphosphate + CO2 + H2O. The enzyme catalyses D-ribulose 1,5-bisphosphate + O2 = 2-phosphoglycolate + (2R)-3-phosphoglycerate + 2 H(+). In terms of biological role, ruBisCO catalyzes two reactions: the carboxylation of D-ribulose 1,5-bisphosphate, the primary event in carbon dioxide fixation, as well as the oxidative fragmentation of the pentose substrate in the photorespiration process. Both reactions occur simultaneously and in competition at the same active site. The protein is Ribulose bisphosphate carboxylase large chain of Sorghum bicolor (Sorghum).